A 94-amino-acid polypeptide reads, in one-letter code: Large ribosomal subunit protein eL31 (94 aa).

It belongs to the eukaryotic ribosomal protein eL31 family.

The sequence is that of Large ribosomal subunit protein eL31 (rpl31e) from Pyrococcus abyssi (strain GE5 / Orsay).